Here is a 376-residue protein sequence, read N- to C-terminus: Pyruvate dehydrogenase E1 component subunit beta-2, mitochondrial (376 aa).

The transit peptide at 1–36 (MLGAARRQLGSGPMLGQVLRRLRPATAAAADAARAY) directs the protein to the mitochondrion. Glutamate 99 is a thiamine diphosphate binding site. Positions 152, 200, 201, and 203 each coordinate K(+).

In terms of assembly, tetramer of 2 alpha and 2 beta subunits. Thiamine diphosphate is required as a cofactor.

Its subcellular location is the mitochondrion matrix. It catalyses the reaction N(6)-[(R)-lipoyl]-L-lysyl-[protein] + pyruvate + H(+) = N(6)-[(R)-S(8)-acetyldihydrolipoyl]-L-lysyl-[protein] + CO2. Functionally, the pyruvate dehydrogenase complex catalyzes the overall conversion of pyruvate to acetyl-CoA and CO(2). It contains multiple copies of three enzymatic components: pyruvate dehydrogenase (E1), dihydrolipoamide acetyltransferase (E2) and lipoamide dehydrogenase (E3). This chain is Pyruvate dehydrogenase E1 component subunit beta-2, mitochondrial, found in Oryza sativa subsp. japonica (Rice).